Reading from the N-terminus, the 337-residue chain is tRNA-dihydrouridine synthase B (337 aa).

FMN-binding positions include 19 to 21 (PMA) and Gln73. Cys103 functions as the Proton donor in the catalytic mechanism. FMN contacts are provided by residues Lys142, 203 to 205 (NGD), and 227 to 228 (GR).

The protein belongs to the Dus family. DusB subfamily. FMN serves as cofactor.

It carries out the reaction a 5,6-dihydrouridine in tRNA + NAD(+) = a uridine in tRNA + NADH + H(+). It catalyses the reaction a 5,6-dihydrouridine in tRNA + NADP(+) = a uridine in tRNA + NADPH + H(+). Catalyzes the synthesis of 5,6-dihydrouridine (D), a modified base found in the D-loop of most tRNAs, via the reduction of the C5-C6 double bond in target uridines. The sequence is that of tRNA-dihydrouridine synthase B from Pseudomonas putida (strain ATCC 47054 / DSM 6125 / CFBP 8728 / NCIMB 11950 / KT2440).